The primary structure comprises 199 residues: Probable DNA-directed RNA polymerase subunit delta (199 aa).

An HTH HARE-type domain is found at 14–81 (LSLIEVAHAI…GDNMWGLRAW (68 aa)). 3 stretches are compositionally biased toward acidic residues: residues 116–147 (GDDD…DTDD), 157–171 (AGVD…DETL), and 182–199 (LNDD…DESK). Positions 116-199 (GDDDDVIDYD…DYDDEDDESK (84 aa)) are disordered.

Belongs to the RpoE family. As to quaternary structure, RNAP is composed of a core of 2 alpha, a beta and a beta' subunits. The core is associated with a delta subunit and one of several sigma factors.

Functionally, participates in both the initiation and recycling phases of transcription. In the presence of the delta subunit, RNAP displays an increased specificity of transcription, a decreased affinity for nucleic acids, and an increased efficiency of RNA synthesis because of enhanced recycling. The sequence is that of Probable DNA-directed RNA polymerase subunit delta from Lactiplantibacillus plantarum (strain ATCC BAA-793 / NCIMB 8826 / WCFS1) (Lactobacillus plantarum).